The primary structure comprises 391 residues: Multidrug resistance protein MdtL (391 aa).

The next 12 membrane-spanning stretches (helical) occupy residues 4–24 (FLICSFALVLLYPAGIDMYLV), 42–62 (IAFSVYLAGMAAAMLFAGKVA), 69–89 (PVAIPGAALFIIASVFCSLAE), 93–113 (LFLAGRFLQGLGAGCCYVVAF), 131–151 (LLNGITCIIPVLAPVLGHLIM), 158–178 (SLFWTMATMGIAVLMLSLFIL), 203–222 (FFLSRVVITTLSVSVILTFV), 245–265 (ALTAGVSMTVSFSTPFALGIF), 269–289 (TLMITSQVLFLAAGITLAVSP), 293–313 (VSLFGITLICAGFSVGFGVAM), 331–351 (LGIAQVCGSSLWIWLAAVVGI), and 356–376 (MLIGILIACSIVSLLLIMFVA).

Belongs to the major facilitator superfamily. DHA1 family. MdtL (TC 2.A.1.2.22) subfamily.

It is found in the cell inner membrane. Confers resistance to chloramphenicol. The chain is Multidrug resistance protein MdtL from Escherichia coli (strain SMS-3-5 / SECEC).